The following is a 172-amino-acid chain: Adenine phosphoribosyltransferase (172 aa).

It belongs to the purine/pyrimidine phosphoribosyltransferase family. As to quaternary structure, homodimer.

Its subcellular location is the cytoplasm. It catalyses the reaction AMP + diphosphate = 5-phospho-alpha-D-ribose 1-diphosphate + adenine. It functions in the pathway purine metabolism; AMP biosynthesis via salvage pathway; AMP from adenine: step 1/1. Functionally, catalyzes a salvage reaction resulting in the formation of AMP, that is energically less costly than de novo synthesis. The polypeptide is Adenine phosphoribosyltransferase (Prochlorococcus marinus (strain NATL1A)).